The primary structure comprises 94 residues: MAAAATTKKRTQRKKKDPNAPKRAMSAYMFFANENRDIVRAENPGISFGQVGRVLGEKWKALSDDEKQPYEAKAEADKKRYESEKELYNATKAA.

Disordered regions lie at residues 1 to 23 (MAAA…APKR) and 64 to 94 (DDEK…TKAA). Basic residues predominate over residues 7–16 (TKKRTQRKKK). Positions 21-89 (PKRAMSAYMF…RYESEKELYN (69 aa)) form a DNA-binding region, HMG box. Over residues 64-87 (DDEKQPYEAKAEADKKRYESEKEL) the composition is skewed to basic and acidic residues.

It belongs to the NHP6 family. In terms of assembly, weakly associates with the stable SPT16-POB3 heterodimer to form the FACT complex.

Its subcellular location is the nucleus. The protein resides in the chromosome. In terms of biological role, DNA-binding protein that induces severe bending of DNA. Required for DNA-binding by the FACT complex, a general chromatin factor that acts to reorganize nucleosomes. The FACT complex is involved in multiple processes that require DNA as a template such as mRNA elongation, DNA replication and DNA repair. Also augments the fidelity of transcription by RNA polymerase III independently of any role in the FACT complex. This chain is Non-histone chromosomal protein 6 (NHP6), found in Eremothecium gossypii (strain ATCC 10895 / CBS 109.51 / FGSC 9923 / NRRL Y-1056) (Yeast).